Here is a 213-residue protein sequence, read N- to C-terminus: tRNA (guanine-N(7)-)-methyltransferase (213 aa).

The S-adenosyl-L-methionine site is built by E38, E63, D91, and D113. Residue D113 is part of the active site. Residues K117, D149, and T192–E195 contribute to the substrate site.

The protein belongs to the class I-like SAM-binding methyltransferase superfamily. TrmB family.

It carries out the reaction guanosine(46) in tRNA + S-adenosyl-L-methionine = N(7)-methylguanosine(46) in tRNA + S-adenosyl-L-homocysteine. The protein operates within tRNA modification; N(7)-methylguanine-tRNA biosynthesis. Functionally, catalyzes the formation of N(7)-methylguanine at position 46 (m7G46) in tRNA. The polypeptide is tRNA (guanine-N(7)-)-methyltransferase (Mycoplasmoides gallisepticum (strain R(low / passage 15 / clone 2)) (Mycoplasma gallisepticum)).